Here is a 601-residue protein sequence, read N- to C-terminus: Probable protein arginine N-methyltransferase 3 (601 aa).

Basic and acidic residues predominate over residues 1 to 10; sequence MAATMVKHEI. The interval 1–50 is disordered; it reads MAATMVKHEILNYSEDEEENYSDEGDWGDWKADDNGIEGGEEEEEDDGDD. 2 stretches are compositionally biased toward acidic residues: residues 14–27 and 35–50; these read SEDE…EGDW and NGIE…DGDD. Residues 57–78 form a C2H2-type zinc finger; that stretch reads CLFCDSHFVSCDLLFEHCRLSH. An SAM-dependent MTase PRMT-type domain is found at 242–554; that stretch reads NENYFGSYSS…NDRREAIGTE (313 aa). Positions 264, 288, 310, 312, 345, and 346 each coordinate S-adenosyl-L-homocysteine. Active-site residues include glutamate 365 and glutamate 374.

The protein belongs to the class I-like SAM-binding methyltransferase superfamily. Protein arginine N-methyltransferase family.

The protein resides in the cytoplasm. It is found in the cytosol. It carries out the reaction L-arginyl-[protein] + S-adenosyl-L-methionine = N(omega)-methyl-L-arginyl-[protein] + S-adenosyl-L-homocysteine + H(+). It catalyses the reaction L-arginyl-[protein] + 2 S-adenosyl-L-methionine = N(omega),N(omega)-dimethyl-L-arginyl-[protein] + 2 S-adenosyl-L-homocysteine + 2 H(+). Functionally, protein-arginine N-methyltransferase that catalyzes both the monomethylation and asymmetric dimethylation of the guanidino nitrogens of arginine residues in target proteins, and therefore falls into the group of type I methyltransferases. This Arabidopsis thaliana (Mouse-ear cress) protein is Probable protein arginine N-methyltransferase 3 (PRMT3).